Consider the following 426-residue polypeptide: L-cysteine:1D-myo-inositol 2-amino-2-deoxy-alpha-D-glucopyranoside ligase (426 aa).

A Zn(2+)-binding site is contributed by Cys43. L-cysteinyl-5'-AMP contacts are provided by residues 43–46, Ser58, and 81–83; these read CGIT and NVT. A 'HIGH' region motif is present at residues 45 to 55; the sequence is ITPYDATHMGH. The short motif at 200 to 205 is the 'ERGGDP' region element; that stretch reads ERGGDP. Trp241 is a binding site for L-cysteinyl-5'-AMP. Zn(2+) is bound at residue Cys245. 263–265 contacts L-cysteinyl-5'-AMP; sequence GSD. His270 contributes to the Zn(2+) binding site. Val296 is an L-cysteinyl-5'-AMP binding site. A 'KMSKS' region motif is present at residues 302–306; the sequence is KMSKS.

This sequence belongs to the class-I aminoacyl-tRNA synthetase family. MshC subfamily. As to quaternary structure, monomer. Requires Zn(2+) as cofactor.

The catalysed reaction is 1D-myo-inositol 2-amino-2-deoxy-alpha-D-glucopyranoside + L-cysteine + ATP = 1D-myo-inositol 2-(L-cysteinylamino)-2-deoxy-alpha-D-glucopyranoside + AMP + diphosphate + H(+). Its function is as follows. Catalyzes the ATP-dependent condensation of GlcN-Ins and L-cysteine to form L-Cys-GlcN-Ins. The chain is L-cysteine:1D-myo-inositol 2-amino-2-deoxy-alpha-D-glucopyranoside ligase from Arthrobacter sp. (strain FB24).